The sequence spans 338 residues: Glycerol-3-phosphate dehydrogenase [NAD(P)+] (338 aa).

Residues Ser-13, Trp-14, and Lys-108 each coordinate NADPH. Sn-glycerol 3-phosphate is bound by residues Lys-108, Gly-139, and Ser-141. Ala-143 contributes to the NADPH binding site. Lys-194, Asp-247, Ser-257, Arg-258, and Asn-259 together coordinate sn-glycerol 3-phosphate. Lys-194 acts as the Proton acceptor in catalysis. Arg-258 provides a ligand contact to NADPH. NADPH-binding residues include Val-282 and Glu-284.

It belongs to the NAD-dependent glycerol-3-phosphate dehydrogenase family.

It is found in the cytoplasm. The enzyme catalyses sn-glycerol 3-phosphate + NAD(+) = dihydroxyacetone phosphate + NADH + H(+). It catalyses the reaction sn-glycerol 3-phosphate + NADP(+) = dihydroxyacetone phosphate + NADPH + H(+). It functions in the pathway membrane lipid metabolism; glycerophospholipid metabolism. Functionally, catalyzes the reduction of the glycolytic intermediate dihydroxyacetone phosphate (DHAP) to sn-glycerol 3-phosphate (G3P), the key precursor for phospholipid synthesis. In Listeria monocytogenes serotype 4b (strain CLIP80459), this protein is Glycerol-3-phosphate dehydrogenase [NAD(P)+].